A 540-amino-acid polypeptide reads, in one-letter code: Transcription termination/antitermination protein NusA (540 aa).

The region spanning 144–214 (GQVIEARVED…SMWPITLSRS (71 aa)) is the S1 motif domain. Positions 319–386 (DTSIEIVVPA…QGIFGIKKRR (68 aa)) constitute a KH domain. Residues 457-540 (VAAPTPTPAP…KQTFDNFDDL (84 aa)) form a disordered region. Residues 461 to 489 (TPTPAPQPTPAPTKVEPVPPPVSVTPKPI) show a composition bias toward pro residues. Basic and acidic residues predominate over residues 512-522 (DDSKTKPEKSS). Over residues 523–540 (AKTNTPQTKQTFDNFDDL) the composition is skewed to polar residues.

It belongs to the NusA family. In terms of assembly, monomer. Binds directly to the core enzyme of the DNA-dependent RNA polymerase and to nascent RNA.

Its subcellular location is the cytoplasm. Functionally, participates in both transcription termination and antitermination. The polypeptide is Transcription termination/antitermination protein NusA (Mycoplasma pneumoniae (strain ATCC 29342 / M129 / Subtype 1) (Mycoplasmoides pneumoniae)).